The chain runs to 67 residues: Large ribosomal subunit protein bL35 (67 aa).

This sequence belongs to the bacterial ribosomal protein bL35 family.

This is Large ribosomal subunit protein bL35 from Leptothrix cholodnii (strain ATCC 51168 / LMG 8142 / SP-6) (Leptothrix discophora (strain SP-6)).